Here is a 1311-residue protein sequence, read N- to C-terminus: Sterol regulatory element-binding protein cleavage-activating protein (1311 aa).

At 1-18 (MPLIDKLRERISRAFYSH) the chain is on the cytoplasmic side. Residues 19 to 39 (GLLCASYPIPIIILTALCILA) traverse the membrane as a helical segment. The Lumenal segment spans residues 40 to 277 (SCYPLLKLPL…HIVHVHFKEE (238 aa)). Positions 46–282 (KLPLPGTGPV…HFKEEIGIAE (237 aa)) are loop-1. 2 N-linked (GlcNAc...) asparagine glycosylation sites follow: Asn242 and Asn261. Residues 278–298 (IGIAELIPLVTTYIILFAYIY) traverse the membrane as a helical segment. The SSD domain maps to 282 to 440 (ELIPLVTTYI…MFFFTTVLSI (159 aa)). At 299 to 310 (FSTRKIDLVKSK) the chain is on the cytoplasmic side. The chain crosses the membrane as a helical span at residues 311 to 331 (WGLALAAVVTVLSSLLMSVGL). The Lumenal portion of the chain corresponds to 332–342 (CTLFGLTPTLN). Residues 343 to 363 (GGEIFPYLVVVIGLENVLVLT) form a helical membrane-spanning segment. Residues 364-399 (KSVVSTPVDLEVKLRIAQGLRNESWFIMKNMATELG) are Cytoplasmic-facing. A helical membrane pass occupies residues 400–420 (IILIGYFTLVPAIQEFCLFAV). Residue Val421 is a topological domain, lumenal. A helical membrane pass occupies residues 422–442 (GLVSDFFLQMFFFTTVLSIDI). Residues 443 to 512 (RRMELADLNK…FFARTRLAQR (70 aa)) lie on the Cytoplasmic side of the membrane. Residues 445 to 450 (MELADL) carry the ER export signal motif. A helical transmembrane segment spans residues 513-533 (IIMAGTVVWIGILVYTDPAGL). Positions 529–726 (DPAGLRNYLT…QTPADVTLYK (198 aa)) are loop-7. Topologically, residues 534–723 (RNYLTVHVTE…TENQTPADVT (190 aa)) are lumenal. N-linked (GlcNAc...) asparagine glycosylation is found at Asn583 and Asn651. Residues 724–744 (LYKVAALGLASGIFLVLFFFL) form a helical membrane-spanning segment. At 745–1311 (LYRLLCPKNY…YVPSVLEKLD (567 aa)) the chain is on the cytoplasmic side. The interval 747–1311 (RLLCPKNYGQ…YVPSVLEKLD (565 aa)) is interaction with srebf. WD repeat units follow at residues 790 to 827 (GHHM…CLTI), 997 to 1034 (SFES…LRCS), 1037 to 1076 (DGQS…NQLQ), 1109 to 1146 (AHRK…CLFT), 1149 to 1187 (GHSG…RVSH), 1190 to 1227 (GHRG…KLYS), and 1230 to 1267 (QDLG…LLQT).

This sequence belongs to the WD repeat SCAP family. Membrane region forms a homotetramer. Component of the SCAP-SREBP complex (composed of SCAP and srebf1/srebp1 or srebf2/srebp2). Forms a ternary complex with insig1 or insig2 through its transmembrane domains at high sterol concentrations. Interacts with the SEC23-SEC24 complex.

It localises to the endoplasmic reticulum membrane. It is found in the golgi apparatus membrane. The protein localises to the cytoplasmic vesicle. The protein resides in the COPII-coated vesicle membrane. In terms of biological role, escort protein required for cholesterol as well as lipid homeostasis. Regulates export of the SCAP-SREBP complex from the endoplasmic reticulum to the Golgi upon low cholesterol, thereby regulating the processing of sterol regulatory element-binding proteins (SREBPs) SREBF1/SREBP1 and SREBF2/SREBP2. At high sterol concentrations, formation of a ternary complex with INSIG (INSIG1 or INSIG2) leads to mask the ER export signal in SCAP, promoting retention of the complex in the endoplasmic reticulum. Low sterol concentrations trigger release of INSIG, a conformational change in the SSD domain of SCAP, unmasking of the ER export signal, promoting recruitment into COPII-coated vesicles and transport of the SCAP-SREBP to the Golgi: in the Golgi, SREBPs are then processed, releasing the transcription factor fragment of SREBPs from the membrane, its import into the nucleus and up-regulation of LDLR, INSIG1 and the mevalonate pathway. Binds cholesterol via its SSD domain. In Xenopus laevis (African clawed frog), this protein is Sterol regulatory element-binding protein cleavage-activating protein.